A 448-amino-acid chain; its full sequence is Asparagine--tRNA ligase (448 aa).

It belongs to the class-II aminoacyl-tRNA synthetase family. In terms of assembly, homodimer.

Its subcellular location is the cytoplasm. It catalyses the reaction tRNA(Asn) + L-asparagine + ATP = L-asparaginyl-tRNA(Asn) + AMP + diphosphate + H(+). This is Asparagine--tRNA ligase from Streptococcus sanguinis (strain SK36).